A 505-amino-acid chain; its full sequence is 11S globulin seed storage protein 1 (505 aa).

The first 24 residues, 1-24 (MAKPILLSIYLCLIIVALFNGCLA), serve as a signal peptide directing secretion. 2 disulfide bridges follow: Cys37–Cys70 and Cys113–Cys323. A Cupin type-1 1 domain is found at 42-255 (LDALEPTNRI…AFNVDTETAR (214 aa)). IgE-binding stretches follow at residues 118-132 (EESQ…RREF), 208-219 (EQHRRQQQHQQR), and 238-249 (FDAEFLADAFNV). Residues 193 to 232 (GNPDDEFRPQGQQEYEQHRRQQQHQQRRGEHGEQQRDLGN) form a disordered region. A compositionally biased stretch (basic and acidic residues) spans 219–228 (RRGEHGEQQR). Residues 282–316 (WSREEQEHEERKERERERESESERRQSRRGGRDDN) are compositionally biased toward basic and acidic residues. The interval 282–318 (WSREEQEHEERKERERERESESERRQSRRGGRDDNGL) is disordered. An NGXEET; peptidase recognition motif motif is present at residues 316-321 (NGLEET). Residues 329–478 (ENIGDPSRAD…AFQIPREDAR (150 aa)) form the Cupin type-1 2 domain.

Belongs to the 11S seed storage protein (globulins) family. Homohexamer. Each subunit is composed of an acidic and a basic chain derived from a single precursor and linked by a disulfide bond. Expressed in seeds (at protein level). Expressed in seeds.

Seed storage protein. The sequence is that of 11S globulin seed storage protein 1 from Carya illinoinensis (Pecan).